The primary structure comprises 667 residues: Transmembrane 9 superfamily member 1 (667 aa).

An N-terminal signal peptide occupies residues Met1 to Ala22. Residues Phe23 to Ser302 lie on the Lumenal side of the membrane. 2 N-linked (GlcNAc...) asparagine glycosylation sites follow: Asn61 and Asn282. The chain crosses the membrane as a helical span at residues Ile303 to Ile323. At His324–Ser370 the chain is on the cytoplasmic side. Residues Ile371–Ala391 form a helical membrane-spanning segment. At Leu392 to Thr405 the chain is on the lumenal side. Residues Val406–Tyr426 form a helical membrane-spanning segment. Residues Lys427–Pro442 are Cytoplasmic-facing. The chain crosses the membrane as a helical span at residues Leu443–Val463. Residues His464–Leu474 lie on the Lumenal side of the membrane. The chain crosses the membrane as a helical span at residues Phe475 to Ile495. Residues Ala496 to Pro527 are Cytoplasmic-facing. Residues Ala528–Tyr548 form a helical membrane-spanning segment. At Thr549 to Phe560 the chain is on the lumenal side. Residues Gly561–Ile581 form a helical membrane-spanning segment. At Thr582–Arg596 the chain is on the cytoplasmic side. Residues Gly597–Thr617 traverse the membrane as a helical segment. Residues Lys618–Ser635 lie on the Lumenal side of the membrane. The chain crosses the membrane as a helical span at residues Val636–Phe656. Topologically, residues Val657–Asp667 are cytoplasmic.

It belongs to the nonaspanin (TM9SF) (TC 9.A.2) family.

It is found in the endosome membrane. The protein localises to the vacuole membrane. With TMN2 and TMN3, plays a critical role in the late stages of a nutrient-controlled pathway notably regulating FLO11 gene expression. Acts downstream of RAS2 and TOR. Essential for cell adhesion and filamentous growth. May play a role as effector of cellular copper homeostasis. This chain is Transmembrane 9 superfamily member 1 (EMP70), found in Saccharomyces cerevisiae (strain ATCC 204508 / S288c) (Baker's yeast).